The chain runs to 244 residues: 7-cyano-7-deazaguanine synthase (244 aa).

ATP is bound at residue 14–24; the sequence is FSGGQDSATCV. Positions 202, 217, 220, and 223 each coordinate Zn(2+).

It belongs to the QueC family. It depends on Zn(2+) as a cofactor.

The catalysed reaction is 7-carboxy-7-deazaguanine + NH4(+) + ATP = 7-cyano-7-deazaguanine + ADP + phosphate + H2O + H(+). It participates in purine metabolism; 7-cyano-7-deazaguanine biosynthesis. Catalyzes the ATP-dependent conversion of 7-carboxy-7-deazaguanine (CDG) to 7-cyano-7-deazaguanine (preQ(0)). This Burkholderia cenocepacia (strain ATCC BAA-245 / DSM 16553 / LMG 16656 / NCTC 13227 / J2315 / CF5610) (Burkholderia cepacia (strain J2315)) protein is 7-cyano-7-deazaguanine synthase.